The chain runs to 433 residues: Divergent protein kinase domain 2B (433 aa).

Positions 1 to 29 (MEPRLGPKAAALHLGWPFLLLWVSGLSYS) are cleaved as a signal peptide. Asn100 carries N-linked (GlcNAc...) asparagine glycosylation.

Belongs to the DIPK family.

It localises to the secreted. The sequence is that of Divergent protein kinase domain 2B (DIPK2B) from Bos taurus (Bovine).